The chain runs to 398 residues: 2-amino-3-ketobutyrate coenzyme A ligase (398 aa).

Residue 111–112 (CF) coordinates pyridoxal 5'-phosphate. Histidine 136 contributes to the substrate binding site. Residues serine 185, 210–213 (DDSH), 241–244 (TLGK), and 274–275 (SN) each bind pyridoxal 5'-phosphate. Lysine 244 carries the N6-(pyridoxal phosphate)lysine modification. Position 368 (arginine 368) interacts with substrate.

It belongs to the class-II pyridoxal-phosphate-dependent aminotransferase family. In terms of assembly, homodimer. Pyridoxal 5'-phosphate is required as a cofactor.

It catalyses the reaction glycine + acetyl-CoA = (2S)-2-amino-3-oxobutanoate + CoA. Its pathway is amino-acid degradation; L-threonine degradation via oxydo-reductase pathway; glycine from L-threonine: step 2/2. In terms of biological role, catalyzes the cleavage of 2-amino-3-ketobutyrate to glycine and acetyl-CoA. This Salmonella typhimurium (strain LT2 / SGSC1412 / ATCC 700720) protein is 2-amino-3-ketobutyrate coenzyme A ligase.